The chain runs to 376 residues: Succinyl-diaminopimelate desuccinylase (376 aa).

Zn(2+) is bound at residue histidine 66. Residue aspartate 68 is part of the active site. Aspartate 99 lines the Zn(2+) pocket. Residue glutamate 133 is the Proton acceptor of the active site. Residues glutamate 134, glutamate 162, and histidine 348 each contribute to the Zn(2+) site.

The protein belongs to the peptidase M20A family. DapE subfamily. In terms of assembly, homodimer. Zn(2+) serves as cofactor. Requires Co(2+) as cofactor.

It carries out the reaction N-succinyl-(2S,6S)-2,6-diaminopimelate + H2O = (2S,6S)-2,6-diaminopimelate + succinate. Its pathway is amino-acid biosynthesis; L-lysine biosynthesis via DAP pathway; LL-2,6-diaminopimelate from (S)-tetrahydrodipicolinate (succinylase route): step 3/3. Catalyzes the hydrolysis of N-succinyl-L,L-diaminopimelic acid (SDAP), forming succinate and LL-2,6-diaminopimelate (DAP), an intermediate involved in the bacterial biosynthesis of lysine and meso-diaminopimelic acid, an essential component of bacterial cell walls. This Xanthomonas euvesicatoria pv. vesicatoria (strain 85-10) (Xanthomonas campestris pv. vesicatoria) protein is Succinyl-diaminopimelate desuccinylase.